The primary structure comprises 216 residues: Elongation factor Ts (216 aa).

An involved in Mg(2+) ion dislocation from EF-Tu region spans residues 80 to 83 (TDFV).

This sequence belongs to the EF-Ts family.

The protein localises to the cytoplasm. Associates with the EF-Tu.GDP complex and induces the exchange of GDP to GTP. It remains bound to the aminoacyl-tRNA.EF-Tu.GTP complex up to the GTP hydrolysis stage on the ribosome. The sequence is that of Elongation factor Ts from Alkaliphilus oremlandii (strain OhILAs) (Clostridium oremlandii (strain OhILAs)).